Consider the following 98-residue polypeptide: NADH-ubiquinone oxidoreductase chain 4L (98 aa).

3 consecutive transmembrane segments (helical) span residues 2-22 (SLVY…LLMF), 29-49 (SLLC…ILIL), and 61-81 (IIML…LVMV).

Belongs to the complex I subunit 4L family. As to quaternary structure, core subunit of respiratory chain NADH dehydrogenase (Complex I) which is composed of 45 different subunits.

It localises to the mitochondrion inner membrane. It catalyses the reaction a ubiquinone + NADH + 5 H(+)(in) = a ubiquinol + NAD(+) + 4 H(+)(out). Functionally, core subunit of the mitochondrial membrane respiratory chain NADH dehydrogenase (Complex I) which catalyzes electron transfer from NADH through the respiratory chain, using ubiquinone as an electron acceptor. Part of the enzyme membrane arm which is embedded in the lipid bilayer and involved in proton translocation. The polypeptide is NADH-ubiquinone oxidoreductase chain 4L (MT-ND4L) (Galemys pyrenaicus (Iberian desman)).